The sequence spans 83 residues: Hainantoxin-III 8 (83 aa).

A signal peptide spans 1 to 21; that stretch reads MKASMFLALAGLVLLFVVGYA. Positions 22-48 are excised as a propeptide; sequence SESEEKEFPRELLSKIFAVDDFTGEER. Intrachain disulfides connect C50–C65, C57–C70, and C64–C77. At L81 the chain carries Leucine amide.

It belongs to the neurotoxin 10 (Hwtx-1) family. 15 (Hntx-3) subfamily. In terms of assembly, monomer. In terms of tissue distribution, expressed by the venom gland.

It localises to the secreted. Selective antagonist of neuronal tetrodotoxin (TTX)-sensitive voltage-gated sodium channels (IC(50)=1270 nM on Nav1.1/SCN1A, 270 nM on Nav1.2/SCN2A, 491 nM on Nav1.3/SCN3A and 232 nM on Nav1.7/SCN9A). This toxin suppress Nav1.7 current amplitude without significantly altering the activation, inactivation, and repriming kinetics. Short extreme depolarizations partially activate the toxin-bound channel, indicating voltage-dependent inhibition of this toxin. This toxin increases the deactivation of the Nav1.7 current after extreme depolarizations. The toxin-Nav1.7 complex is gradually dissociated upon prolonged strong depolarizations in a voltage-dependent manner, and the unbound toxin rebinds to Nav1.7 after a long repolarization. Moreover, analysis of chimeric channels showed that the DIIS3-S4 linker is critical for toxin binding to Nav1.7. These data are consistent with this toxin interacting with Nav1.7 site 4 and trapping the domain II voltage sensor in the closed state. The polypeptide is Hainantoxin-III 8 (Cyriopagopus hainanus (Chinese bird spider)).